The primary structure comprises 106 residues: UPF0213 protein KPN78578_35340 (106 aa).

One can recognise a GIY-YIG domain in the interval 13–88 (VCWFLYLIRT…KQLTKREKER (76 aa)).

The protein belongs to the UPF0213 family.

This Klebsiella pneumoniae subsp. pneumoniae (strain ATCC 700721 / MGH 78578) protein is UPF0213 protein KPN78578_35340.